A 667-amino-acid polypeptide reads, in one-letter code: Leucine-rich repeat-containing protein 43 (667 aa).

The span at 1 to 11 (METSESSTSDY) shows a compositional bias: polar residues. The tract at residues 1 to 24 (METSESSTSDYRQTEGEGEGVPGT) is disordered. LRR repeat units lie at residues 148–169 (KLEELVLSANKIEEIDANNLPP), 170–191 (TLKVLELYGNLIASMECLCSAP), 194–213 (RLQHLGLGHNKLLGPLESLY), and 221–242 (QLVSLDLGFNNLTDLQNMILGL). One can recognise an LRRCT domain in the interval 256–294 (NPLSLVPYYRGFTIDSLAHLCVLDDITVSPNEKHQFRGL). Disordered stretches follow at residues 374–407 (FSGTDEEDQQEDPLDGRHRHRGRQRFHPGSTEEM), 533–570 (ESPLPAKKGKDNNKKKEPAKDKVHKKKKEPPRELRQDP), and 616–640 (SKKVKKSLKKDRSKTVPPTMESGYQ). Residues 377-386 (TDEEDQQEDP) are compositionally biased toward acidic residues. A compositionally biased stretch (basic residues) spans 390 to 399 (RHRHRGRQRF). Residues 540 to 553 (KGKDNNKKKEPAKD) show a composition bias toward basic and acidic residues. The segment covering 617 to 627 (KKVKKSLKKDR) has biased composition (basic residues).

In Mus musculus (Mouse), this protein is Leucine-rich repeat-containing protein 43 (Lrrc43).